Reading from the N-terminus, the 1199-residue chain is DNA-directed RNA polymerase subunit beta (1199 aa).

The disordered stretch occupies residues 1177–1199 (EQEEKKAKEAEQETAEKEETKTE).

Belongs to the RNA polymerase beta chain family. In terms of assembly, the RNAP catalytic core consists of 2 alpha, 1 beta, 1 beta' and 1 omega subunit. When a sigma factor is associated with the core the holoenzyme is formed, which can initiate transcription.

It catalyses the reaction RNA(n) + a ribonucleoside 5'-triphosphate = RNA(n+1) + diphosphate. Its function is as follows. DNA-dependent RNA polymerase catalyzes the transcription of DNA into RNA using the four ribonucleoside triphosphates as substrates. The polypeptide is DNA-directed RNA polymerase subunit beta (Ligilactobacillus salivarius (strain UCC118) (Lactobacillus salivarius)).